The chain runs to 2009 residues: Sodium channel protein type 1 subunit alpha (2009 aa).

Residues 1 to 128 lie on the Cytoplasmic side of the membrane; the sequence is MEQTVLVPPG…KIAIKILVHS (128 aa). The segment covering 28–48 has biased composition (basic and acidic residues); sequence RIAEEKAKNPKPDKKDDDENG. The disordered stretch occupies residues 28–60; it reads RIAEEKAKNPKPDKKDDDENGPKPNSDLEAGKN. Residues 110–454 form an I repeat; the sequence is ILTPFNPLRK…QQMLEQLKKQ (345 aa). The chain crosses the membrane as a helical span at residues 129 to 146; that stretch reads LFSMLIMCTILTNCVFMT. Residues 147 to 152 are Extracellular-facing; sequence MSNPPD. A helical membrane pass occupies residues 153 to 177; sequence WTKNVEYTFTGIYTFESLIKIIARG. Residues 178–188 are Cytoplasmic-facing; it reads FCLEDFTFLRD. Residues 189–205 form a helical membrane-spanning segment; sequence PWNWLDFTVITFAYVTE. Residues 206 to 213 lie on the Extracellular side of the membrane; that stretch reads FVDLGNVS. A helical transmembrane segment spans residues 214–235; it reads ALRTFRVLRALKTISVIPGLKT. Over 236–245 the chain is Cytoplasmic; that stretch reads IVGALIQSVK. The helical transmembrane segment at 246 to 269 threads the bilayer; sequence KLSDVMILTVFCLSVFALIGLQLF. Over 270–369 the chain is Extracellular; the sequence is MGNLRNKCVQ…YGYTSFDTFS (100 aa). 2 disulfide bridges follow: Cys277-Cys345 and Cys336-Cys351. N-linked (GlcNAc...) asparagine glycans are attached at residues Asn295, Asn301, Asn306, and Asn338. Residues 370–384 constitute an intramembrane region (pore-forming); the sequence is WAFLSLFRLMTQDFW. Residues 385–397 lie on the Extracellular side of the membrane; sequence ENLYQLTLRAAGK. Residues 398–423 form a helical membrane-spanning segment; the sequence is TYMIFFVLVIFLGSFYLINLILAVVA. The Cytoplasmic segment spans residues 424–768; the sequence is MAYEEQNQAT…HIVNLVVMDP (345 aa). Residues 455–528 are disordered; the sequence is QEAAQQAAAT…EFHKSESEDS (74 aa). Residues 456-466 show a composition bias toward low complexity; that stretch reads EAAQQAAATTA. Ser470 is modified (phosphoserine). The segment covering 479–492 has biased composition (low complexity); sequence LSDSSSEASKLSSK. Positions 495–506 are enriched in basic residues; the sequence is KERRNRRKKRKQ. The segment covering 507–528 has biased composition (basic and acidic residues); sequence KEQSGGEEKDDDEFHKSESEDS. Residues Ser523, Ser525, Ser550, Ser551, Ser607, and Ser730 each carry the phosphoserine modification. Residues 584-627 form a disordered region; that stretch reads VGSENDFADDEHSTFEDNESRRDSLFVPRRHGERRNSNLSQTSR. The segment covering 593 to 607 has biased composition (basic and acidic residues); it reads DEHSTFEDNESRRDS. Residues 750-1022 form an II repeat; sequence CSPYWLKVKH…QIAVDRMHKG (273 aa). Residues 769–787 form a helical membrane-spanning segment; it reads FVDLAITICIVLNTLFMAM. Over 788-797 the chain is Extracellular; the sequence is EHYPMTEHFN. Residues 798 to 820 form a helical membrane-spanning segment; the sequence is HVLTVGNLVFTGIFTAEMFLKII. At 821-830 the chain is on the cytoplasmic side; sequence AMDPYYYFQE. The chain crosses the membrane as a helical span at residues 831-849; sequence GWNIFDGFIVTLSLVELGL. Residues 850-854 are Extracellular-facing; that stretch reads ANVEG. The helical transmembrane segment at 855–874 threads the bilayer; that stretch reads LSVLRSFRLLRVFKLAKSWP. Over 875–891 the chain is Cytoplasmic; that stretch reads TLNMLIKIIGNSVGALG. Residues 892-912 form a helical membrane-spanning segment; the sequence is NLTLVLAIIVFIFAVVGMQLF. Residues 913–938 lie on the Extracellular side of the membrane; sequence GKSYKDCVCKIATDCKLPRWHMNDFF. Cys921 and Cys927 form a disulfide bridge. The pore-forming intramembrane region spans 939–952; it reads HSFLIVFRVLCGEW. Topologically, residues 953 to 965 are extracellular; the sequence is IETMWDCMEVAGQ. The cysteines at positions 959 and 968 are disulfide-linked. A helical transmembrane segment spans residues 966–992; the sequence is AMCLTVFMMVMVIGNLVVLNLFLALLL. The Cytoplasmic segment spans residues 993–1218; sequence SSFSADNLAA…RTCFRIVEHN (226 aa). Positions 1129–1163 are disordered; that stretch reads TEDFSSESDLEESKEKLNESSSSSEGSTVDIGAPA. The stretch at 1200–1514 is one III repeat; the sequence is RGKQWWNLRR…KKYYNAMKKL (315 aa). The chain crosses the membrane as a helical span at residues 1219–1237; the sequence is WFETFIVFMILLSSGALAF. Over 1238–1250 the chain is Extracellular; the sequence is EDIYIDQRKTIKT. A helical transmembrane segment spans residues 1251–1276; it reads MLEYADKVFTYIFILEMLLKWVAYGY. Over 1277 to 1278 the chain is Cytoplasmic; the sequence is QT. The chain crosses the membrane as a helical span at residues 1279–1304; sequence YFTNAWCWLDFLIVDVSLVSLTANAL. At 1305–1313 the chain is on the extracellular side; that stretch reads GYSELGAIK. The helical transmembrane segment at 1314–1332 threads the bilayer; it reads SLRTLRALRPLRALSRFEG. At 1333–1345 the chain is on the cytoplasmic side; it reads MRVVVNALLGAIP. The chain crosses the membrane as a helical span at residues 1346–1369; that stretch reads SIMNVLLVCLIFWLIFSIMGVNLF. The Extracellular portion of the chain corresponds to 1370–1415; it reads AGKFYHCVNTTTGDIFEISEVNNHSDCLKLIERNETARWKNVKVNF. A disulfide bridge connects residues Cys1376 and Cys1396. The pore-forming intramembrane region spans 1416–1433; that stretch reads DNVGFGYLSLLQVATFKG. Residues 1434 to 1457 are Extracellular-facing; it reads WMDIMYAAVDSRNVELQPKYEESL. A helical membrane pass occupies residues 1458 to 1483; the sequence is YMYLYFVIFIIFGSFFTLNLFIGVII. At 1484–1541 the chain is on the cytoplasmic side; the sequence is DNFNQQKKKFGGQDIFMTEEQKKYYNAMKKLGSKKPQKPIPRPGNKFQGMVFDFVTRQ. At Ser1516 the chain carries Phosphoserine; by PKC. One copy of the IV repeat lies at 1523–1821; that stretch reads IPRPGNKFQG…WEKFDPDATQ (299 aa). A helical membrane pass occupies residues 1542–1560; the sequence is VFDISIMILICLNMVTMMV. Residues 1561 to 1571 lie on the Extracellular side of the membrane; it reads ETDDQSDYVTS. The segment at 1561 to 1571 is S1-S2 loop of repeat IV; it reads ETDDQSDYVTS. A helical transmembrane segment spans residues 1572–1593; that stretch reads ILSRINLVFIVLFTGECVLKLI. At 1594–1601 the chain is on the cytoplasmic side; it reads SLRHYYFT. Residues 1602–1623 traverse the membrane as a helical segment; sequence IGWNIFDFVVVILSIVGMFLAE. The tract at residues 1619–1636 is S3b-S4 loop of repeat IV; that stretch reads MFLAELIEKYFVSPTLFR. The Extracellular segment spans residues 1624 to 1636; that stretch reads LIEKYFVSPTLFR. A helical transmembrane segment spans residues 1637–1655; it reads VIRLARIGRILRLIKGAKG. At 1656 to 1665 the chain is on the cytoplasmic side; the sequence is IRTLLFALMM. A helical membrane pass occupies residues 1666-1688; that stretch reads SLPALFNIGLLLFLVMFIYAIFG. Topologically, residues 1689-1711 are extracellular; it reads MSNFAYVKREVGIDDMFNFETFG. An intramembrane region (pore-forming) is located at residues 1712–1726; that stretch reads NSMICLFQITTSAGW. Topologically, residues 1727 to 1759 are extracellular; the sequence is DGLLAPILNSKPPDCDPNKVNPGSSVKGDCGNP. Cys1741 and Cys1756 form a disulfide bridge. Residues 1760–1788 traverse the membrane as a helical segment; the sequence is SVGIFFFVSYIIISFLVVVNMYIAVILEN. Residues 1789–2009 lie on the Cytoplasmic side of the membrane; the sequence is FSVATEESAE…EGKDEKAKGK (221 aa). Positions 1915–1944 constitute an IQ domain; that stretch reads EEVSAVIIQRAYRRHLLKRTVKQASFTYNK. Positions 1984–2009 are disordered; sequence PSYDRVTKPIVEKHEQEGKDEKAKGK. Over residues 1988-2009 the composition is skewed to basic and acidic residues; the sequence is RVTKPIVEKHEQEGKDEKAKGK.

The protein belongs to the sodium channel (TC 1.A.1.10) family. Nav1.1/SCN1A subfamily. In terms of assembly, the Nav1.1 voltage-gated sodium channel consists of an ion-conducting alpha subunit SCN1A which is functional on its own regulated by one or more beta-1 (SCN1B), beta-2 (SCN2B), beta-3 (SCN3B) and beta-4 (SCN4B) subunits. SCN1B and SCN3B are non-covalently associated with SCN1A. SCN2B and SCN4B are disulfide-linked to SCN1A. SCN1B regulates both the expression at the plasma membrane and the voltage dependence of Nav1.1 inactivation. SCN3B and SCN4B reduce Nav1.1 conductance. Probably interacts with TMEM233; modulates the gating properties of NaV1.1. Interacts with FGF13; regulates the steady-state inactivation of Nav.1.1. In terms of processing, phosphorylation at Ser-1516 by PKC in a highly conserved cytoplasmic loop slows inactivation of the sodium channel and reduces peak sodium currents. As to expression, present in cerebellar Purkinje neurons (at protein level). Expressed by myelinated, non-C-fiber neurons in sensory ganglia.

It localises to the cell membrane. It catalyses the reaction Na(+)(in) = Na(+)(out). Its activity is regulated as follows. Activated by the spider toxins Hm1a and Hm1b (H.maculata, AC P60992 and AC P0DOC5) eliciting acute pain and mechanical allodynia. Pore-forming subunit of Nav1.1, a voltage-gated sodium (Nav) channel that directly mediates the depolarizing phase of action potentials in excitable membranes. Navs, also called VGSCs (voltage-gated sodium channels) or VDSCs (voltage-dependent sodium channels), operate by switching between closed and open conformations depending on the voltage difference across the membrane. In the open conformation they allow Na(+) ions to selectively pass through the pore, along their electrochemical gradient. The influx of Na(+) ions provokes membrane depolarization, initiating the propagation of electrical signals throughout cells and tissues. By regulating the excitability of neurons, ensures that they respond appropriately to synaptic inputs, maintaining the balance between excitation and inhibition in brain neural circuits. Nav1.1 plays a role in controlling the excitability and action potential propagation from somatosensory neurons, thereby contributing to the sensory perception of mechanically-induced pain. The polypeptide is Sodium channel protein type 1 subunit alpha (Mus musculus (Mouse)).